Reading from the N-terminus, the 440-residue chain is D-serine dehydratase (440 aa).

Lys116 bears the N6-(pyridoxal phosphate)lysine mark.

This sequence belongs to the serine/threonine dehydratase family. DsdA subfamily. Monomer. It depends on pyridoxal 5'-phosphate as a cofactor.

The enzyme catalyses D-serine = pyruvate + NH4(+). The protein is D-serine dehydratase of Salmonella schwarzengrund (strain CVM19633).